Here is a 197-residue protein sequence, read N- to C-terminus: ATP-dependent Clp protease proteolytic subunit 2 (197 aa).

The active-site Nucleophile is S96. H121 is an active-site residue.

The protein belongs to the peptidase S14 family. Fourteen ClpP subunits assemble into 2 heptameric rings which stack back to back to give a disk-like structure with a central cavity, resembling the structure of eukaryotic proteasomes.

The protein localises to the cytoplasm. The catalysed reaction is Hydrolysis of proteins to small peptides in the presence of ATP and magnesium. alpha-casein is the usual test substrate. In the absence of ATP, only oligopeptides shorter than five residues are hydrolyzed (such as succinyl-Leu-Tyr-|-NHMec, and Leu-Tyr-Leu-|-Tyr-Trp, in which cleavage of the -Tyr-|-Leu- and -Tyr-|-Trp bonds also occurs).. In terms of biological role, cleaves peptides in various proteins in a process that requires ATP hydrolysis. Has a chymotrypsin-like activity. Plays a major role in the degradation of misfolded proteins. The protein is ATP-dependent Clp protease proteolytic subunit 2 of Parasynechococcus marenigrum (strain WH8102).